We begin with the raw amino-acid sequence, 356 residues long: UDP-N-acetylglucosamine--N-acetylmuramyl-(pentapeptide) pyrophosphoryl-undecaprenol N-acetylglucosamine transferase (356 aa).

UDP-N-acetyl-alpha-D-glucosamine-binding residues include serine 198 and glutamine 289.

Belongs to the glycosyltransferase 28 family. MurG subfamily.

It localises to the cell membrane. It catalyses the reaction Mur2Ac(oyl-L-Ala-gamma-D-Glu-L-Lys-D-Ala-D-Ala)-di-trans,octa-cis-undecaprenyl diphosphate + UDP-N-acetyl-alpha-D-glucosamine = beta-D-GlcNAc-(1-&gt;4)-Mur2Ac(oyl-L-Ala-gamma-D-Glu-L-Lys-D-Ala-D-Ala)-di-trans,octa-cis-undecaprenyl diphosphate + UDP + H(+). Its pathway is cell wall biogenesis; peptidoglycan biosynthesis. In terms of biological role, cell wall formation. Catalyzes the transfer of a GlcNAc subunit on undecaprenyl-pyrophosphoryl-MurNAc-pentapeptide (lipid intermediate I) to form undecaprenyl-pyrophosphoryl-MurNAc-(pentapeptide)GlcNAc (lipid intermediate II). In Streptococcus thermophilus (strain ATCC BAA-491 / LMD-9), this protein is UDP-N-acetylglucosamine--N-acetylmuramyl-(pentapeptide) pyrophosphoryl-undecaprenol N-acetylglucosamine transferase.